The following is a 130-amino-acid chain: Small ribosomal subunit protein uS9 (130 aa).

The interval 98-130 is disordered; the sequence is LKKAGMLTRDPRMKERKKYGLKKARKASQFSKR. The segment covering 111–130 has biased composition (basic residues); the sequence is KERKKYGLKKARKASQFSKR.

Belongs to the universal ribosomal protein uS9 family.

This Lacticaseibacillus casei (strain BL23) (Lactobacillus casei) protein is Small ribosomal subunit protein uS9.